A 372-amino-acid polypeptide reads, in one-letter code: Partitioning defective 6 homolog beta (372 aa).

S11 is modified (phosphoserine). Residues 16–96 (TMEVKSKFGA…PLLRIFIQKK (81 aa)) enclose the PB1 domain. Residues 126 to 253 (RKKPHIVISM…ITVRPANQRN (128 aa)) form an interaction with PARD3 and CDC42 region. One can recognise a Pseudo-CRIB domain in the interval 133–150 (ISMPQDFRPVSSIIDVDI). A PDZ domain is found at 157–250 (RVRLYKYGTE…NLIITVRPAN (94 aa)). Residues 253–272 (NNVVRNSRTSGSSGQSTDNS) are compositionally biased toward polar residues. The tract at residues 253 to 292 (NNVVRNSRTSGSSGQSTDNSLLGYPQQIEPSFEPEDEDSE) is disordered.

It belongs to the PAR6 family. Interacts with PARD3. Interacts with GTP-bound forms of CDC42 and RAC1. Interacts with GTP-bound RHOQ/TC10. Interacts with PALS1. Interacts with the N-terminal part of PRKCI and PRKCZ. Part of a complex with PARD3, CDC42 or RAC1 and PRKCI or PRKCZ. Part of a complex with LLGL1 and PRKCI. Interacts with PARD3B. Interacts with ECT2. As to expression, expressed in pancreas and in both adult and fetal kidney. Weakly expressed in placenta and lung. Not expressed in other tissues.

Its subcellular location is the cytoplasm. The protein resides in the cell membrane. It is found in the cell junction. The protein localises to the tight junction. Its function is as follows. Adapter protein involved in asymmetrical cell division and cell polarization processes. Probably involved in formation of epithelial tight junctions. Association with PARD3 may prevent the interaction of PARD3 with F11R/JAM1, thereby preventing tight junction assembly. The PARD6-PARD3 complex links GTP-bound Rho small GTPases to atypical protein kinase C proteins. This Homo sapiens (Human) protein is Partitioning defective 6 homolog beta (PARD6B).